The sequence spans 547 residues: Intercellular adhesion molecule 3 (547 aa).

The signal sequence occupies residues 1–29 (MATMVPSVLWPRACWTLLVCCLLTPGVQG). Residues 30–485 (QEFLLRVEPQ…VMDIEAGSSH (456 aa)) are Extracellular-facing. The region spanning 46–103 (GGSLFVNCSTDCPSSEKIALETSLSKELVASGMGWAAFNLSNVTGNSRILCSVYCNGS) is the Ig-like C2-type 1 domain. N-linked (GlcNAc...) asparagine glycosylation is found at asparagine 52, asparagine 84, asparagine 87, asparagine 101, asparagine 110, and asparagine 134. 2 disulfides stabilise this stretch: cysteine 53/cysteine 96 and cysteine 57/cysteine 100. The Ig-like C2-type 2 domain maps to 132 to 197 (GQNFTLRCQV…FSCRTELDMQ (66 aa)). Cysteine 139 and cysteine 190 are disulfide-bonded. N-linked (GlcNAc...) asparagine glycosylation is found at asparagine 206, asparagine 264, asparagine 295, asparagine 308, asparagine 320, asparagine 363, asparagine 389, asparagine 453, and asparagine 457. The 68-residue stretch at 234–301 (ETSWPVDCTL…IVCNVTLGGE (68 aa)) folds into the Ig-like C2-type 3 domain. Cysteine 241 and cysteine 294 are joined by a disulfide. One can recognise an Ig-like C2-type 4 domain in the interval 329 to 382 (GSTVTVSCMAGARVQVTLDGVPAAAPGQPAQLQLNATESDDRRSFFCSATLEVD). Cysteine 336 and cysteine 375 form a disulfide bridge. Positions 416 to 469 (KTTHVLQCQARGNPYPELRCLKEGSSREVPVGIPFFVNVTHNGTYQCQASSSRG) constitute an Ig-like C2-type 5 domain. A disulfide bridge links cysteine 423 with cysteine 462. A helical membrane pass occupies residues 486–510 (FVPVFVAVLLTLGVVTIVLALMYVF). Residues 511–547 (REHKRSGSYHVREESTYLPLTSMQPTQAMGEEPSRAE) are Cytoplasmic-facing.

Belongs to the immunoglobulin superfamily. ICAM family. As to quaternary structure, interacts with moesin/MSN. Upon stimulation by a physiologic stimuli becomes rapidly and transiently phosphorylated on serine residues. Leukocytes.

Its subcellular location is the membrane. In terms of biological role, ICAM proteins are ligands for the leukocyte adhesion protein LFA-1 (integrin alpha-L/beta-2). ICAM3 is also a ligand for integrin alpha-D/beta-2. In association with integrin alpha-L/beta-2, contributes to apoptotic neutrophil phagocytosis by macrophages. The polypeptide is Intercellular adhesion molecule 3 (ICAM3) (Pan troglodytes (Chimpanzee)).